The sequence spans 216 residues: Large ribosomal subunit protein uL3 (216 aa).

The interval 135 to 156 is disordered; that stretch reads LGASHGTQRKHRSPGSIGGCAT.

The protein belongs to the universal ribosomal protein uL3 family. As to quaternary structure, part of the 50S ribosomal subunit. Forms a cluster with proteins L14 and L19.

Its function is as follows. One of the primary rRNA binding proteins, it binds directly near the 3'-end of the 23S rRNA, where it nucleates assembly of the 50S subunit. This Thermobifida fusca (strain YX) protein is Large ribosomal subunit protein uL3.